A 747-amino-acid polypeptide reads, in one-letter code: ATPase family gene 2 protein homolog B (747 aa).

Residue methionine 1 is modified to N-acetylmethionine. Residues 234–241 (GPPGVGKT) and 500–507 (GPPGCAKT) each bind ATP.

It belongs to the AAA ATPase family. AFG2 subfamily. Part of the 55LCC heterohexameric ATPase complex composed at least of AIRIM, AFG2A, AFG2B and CINP. Associates with pre-60S ribosomal particles. As to expression, expressed in neurons; also expressed at lower level in astrocytes, oligodendrocytes and microglia.

The protein localises to the cytoplasm. Its subcellular location is the cytoskeleton. It localises to the spindle. The protein resides in the nucleus. It carries out the reaction ATP + H2O = ADP + phosphate + H(+). Its activity is regulated as follows. In the context of 55LCC heterohexameric ATPase complex, the ATPase activity is stimulated by DNA binding and inhibited in presence of RNA. Functionally, ATP-dependent chaperone part of the 55LCC heterohexameric ATPase complex which is chromatin-associated and promotes replisome proteostasis to maintain replication fork progression and genome stability. Required for replication fork progression, sister chromatid cohesion, and chromosome stability. The ATPase activity is specifically enhanced by replication fork DNA and is coupled to cysteine protease-dependent cleavage of replisome substrates in response to replication fork damage. Uses ATPase activity to process replisome substrates in S-phase, facilitating their proteolytic turnover from chromatin to ensure DNA replication and mitotic fidelity. Plays an essential role in the cytoplasmic maturation steps of pre-60S ribosomal particles by promoting the release of shuttling protein RSL24D1/RLP24 from the pre-ribosomal particles. In Rattus norvegicus (Rat), this protein is ATPase family gene 2 protein homolog B (Afg2b).